The chain runs to 256 residues: Trypsin, alkaline B (256 aa).

The first 17 residues, 1–17 (MRLFLALLALGFAAVAA), serve as a signal peptide directing secretion. Positions 18–24 (VPANPQR) are cleaved as a propeptide — activation peptide. Positions 25 to 256 (IVGGSTTTIQ…RFANWIRNNS (232 aa)) constitute a Peptidase S1 domain. Cys55 and Cys71 are joined by a disulfide. Residues His70 and Asp115 each act as charge relay system in the active site. 2 cysteine pairs are disulfide-bonded: Cys180-Cys197 and Cys209-Cys233. Ser213 serves as the catalytic Charge relay system.

This sequence belongs to the peptidase S1 family. As to expression, midgut.

It is found in the secreted. Its subcellular location is the extracellular space. It catalyses the reaction Preferential cleavage: Arg-|-Xaa, Lys-|-Xaa.. In Manduca sexta (Tobacco hawkmoth), this protein is Trypsin, alkaline B.